Reading from the N-terminus, the 319-residue chain is Transcription factor jun-1 (319 aa).

Disordered regions lie at residues 1–52 (MEED…EKES) and 216–264 (NGVN…CRQK). A compositionally biased stretch (low complexity) spans 8 to 19 (PPSSSTSSESPE). Residues 28 to 38 (PTRRRKNSKKD) are compositionally biased toward basic residues. The basic motif stretch occupies residues 244-285 (KKKLERKRARNRQAATKCRQKKMDRIKELEEQVLHEKHRGQR). In terms of domain architecture, bZIP spans 244-307 (KKKLERKRAR…EHFRRTVEHH (64 aa)). The interval 286–293 (LDAELLEL) is leucine-zipper.

It belongs to the bZIP family. Jun subfamily. In terms of assembly, heterodimer; with fos-1. As to expression, isoform a, isoform b, isoform c and isoform d are expressed in the spermatheca.

Its subcellular location is the nucleus. Transcription factor that recognizes and binds to the AP-1 non-canonical enhancer heptamer motif 5'-TTAGTCA-3'. Required for ovulation. Controls plc-1 expression in the spermatheca to regulate spermathecal valve dilation. In Caenorhabditis elegans, this protein is Transcription factor jun-1.